Reading from the N-terminus, the 386-residue chain is Outer membrane protein assembly factor BamB (386 aa).

An N-terminal signal peptide occupies residues 1–20; it reads MKKLFNQVLVAAGVLALLAG. Cys21 is lipidated: N-palmitoyl cysteine. A lipid anchor (S-diacylglycerol cysteine) is attached at Cys21.

It belongs to the BamB family. Part of the Bam complex.

It localises to the cell outer membrane. In terms of biological role, part of the outer membrane protein assembly complex, which is involved in assembly and insertion of beta-barrel proteins into the outer membrane. The protein is Outer membrane protein assembly factor BamB of Vibrio cholerae serotype O1 (strain ATCC 39315 / El Tor Inaba N16961).